We begin with the raw amino-acid sequence, 247 residues long: uncharacterized protein (247 aa).

One can recognise an N-acetyltransferase domain in the interval 70-205 (ISLWMGPGNN…QKVPLEIMIR (136 aa)).

This sequence belongs to the acetyltransferase family.

The protein localises to the endoplasmic reticulum. The protein resides in the golgi apparatus. Its subcellular location is the vacuole. This is an uncharacterized protein from Schizosaccharomyces pombe (strain 972 / ATCC 24843) (Fission yeast).